A 213-amino-acid polypeptide reads, in one-letter code: Large ribosomal subunit protein uL1 (213 aa).

It belongs to the universal ribosomal protein uL1 family. As to quaternary structure, part of the 50S ribosomal subunit.

Functionally, binds directly to 23S rRNA. Probably involved in E site tRNA release. Protein L1 is also a translational repressor protein, it controls the translation of its operon by binding to its mRNA. This Methanosarcina barkeri (strain Fusaro / DSM 804) protein is Large ribosomal subunit protein uL1.